The primary structure comprises 434 residues: Glycoprotein U20 (434 aa).

A signal peptide spans 1–15 (MITVFVACLFQCVSS). A helical transmembrane segment spans residues 322–342 (LLWIFIVIPIAAGCMFLYILT).

Its subcellular location is the host endoplasmic reticulum membrane. The protein resides in the host lysosome membrane. In terms of biological role, plays a role in the down-regulation of the host stress-induced NKG2D ligand UBPL1, which enables immune cells expressing the NKG2D receptor to recognize and annihilate infected cells prior to viral spread. This is Glycoprotein U20 (U20) from Human herpesvirus 6B (strain Z29) (HHV-6 variant B).